A 2581-amino-acid polypeptide reads, in one-letter code: Chromodomain-helicase-DNA-binding protein 8 (2581 aa).

3 disordered regions span residues 22 to 114 (DDSF…QTST), 253 to 281 (VKGSAPAGNPGATGPPLKPAVTLTSTPAQ), and 349 to 375 (QKIQIVPQPPSSQPQPQPPPSAQPLTL). 2 stretches are compositionally biased toward polar residues: residues 42–64 (SLDSLDQMNQDGGSGDVGNSSAS) and 94–114 (DYTTQPTSQEQPAQPVLQTST). A compositionally biased stretch (low complexity) spans 255-267 (GSAPAGNPGATGP). The span at 355–370 (PQPPSSQPQPQPPPSA) shows a compositional bias: pro residues. A Phosphoserine modification is found at S432. 2 disordered regions span residues 473–584 (RARG…KRKK) and 596–616 (DEEEEEVDVTGPIKPEPILPE). Residues 493 to 516 (RPEEEGEKKRRKKSSGERLKEEKP) show a composition bias toward basic and acidic residues. 2 positions are modified to phosphoserine: S553 and S562. Over residues 572 to 584 (QKRRSNRQVKRKK) the composition is skewed to basic residues. Residue K609 forms a Glycyl lysine isopeptide (Lys-Gly) (interchain with G-Cter in SUMO) linkage. Chromo domains lie at 642–709 (AIVD…AQMR) and 724–790 (VEVD…RVNR). The Helicase ATP-binding domain occupies 823–997 (LFNWYNRQNC…FSLLHFLEPS (175 aa)). An ATP-binding site is contributed by 836–843 (DEMGLGKT). Positions 948 to 951 (DEAH) match the DEAH box motif. Residues 1137–1288 (LIDKLLPKLK…KAVLQSMSGR (152 aa)) form the Helicase C-terminal domain. A phosphoserine mark is found at S1420 and S1424. Positions 1692–1713 (EDPEYKPLQGPPKDPDDEGDPL) are disordered. Residues 1789-2302 (IARREKQQRW…LVELEVECME (514 aa)) form an interaction with FAM124B region. A phosphoserine mark is found at S1976 and S1978. The tract at residues 1988–2016 (QCTSRTASPSPLRPDVPAEKSPEENAVQV) is disordered. The residue at position 1993 (T1993) is a Phosphothreonine. Residues S1995, S1997, and S2008 each carry the phosphoserine modification. A Glycyl lysine isopeptide (Lys-Gly) (interchain with G-Cter in SUMO2) cross-link involves residue K2025. Disordered regions lie at residues 2047–2118 (SSDT…YDEE) and 2179–2221 (NRRS…SSSA). Residues 2063 to 2072 (EDDDDSDSEL) show a composition bias toward acidic residues. Phosphoserine is present on residues S2068 and S2070. The span at 2075–2094 (SKLSPSSSSSSSSSSSSSSS) shows a compositional bias: low complexity. Over residues 2102–2116 (EEKLTADRSRPKLYD) the composition is skewed to basic and acidic residues. 3 positions are modified to phosphoserine: S2182, S2200, and S2202. At T2204 the chain carries Phosphothreonine. At S2211 the chain carries Phosphoserine. T2215 is modified (phosphothreonine). Phosphoserine is present on S2223. K2256 participates in a covalent cross-link: Glycyl lysine isopeptide (Lys-Gly) (interchain with G-Cter in SUMO2). Positions 2484 to 2581 (PHVDSSTMLH…NSDSSDDADD (98 aa)) are disordered. Residues 2492-2510 (LHHHHHHPHPHHHHHHHPG) show a composition bias toward basic residues. The segment covering 2513 to 2528 (TTGYPSSPATTTSGTA) has biased composition (low complexity). S2519 carries the phosphoserine modification. Acidic residues predominate over residues 2537–2550 (EDDDEEEDEDDDDL). The span at 2565–2574 (DDPMMPANSD) shows a compositional bias: low complexity.

This sequence belongs to the SNF2/RAD54 helicase family. CHD8 subfamily. As to quaternary structure, interacts with p53/TP53, histone H1 and CTCF. Component of some MLL1/MLL complex, at least composed of the core components KMT2A/MLL1, ASH2L, HCFC1/HCF1, WDR5 and RBBP5, as well as the facultative components BACC1, CHD8, E2F6, HSP70, INO80C, KANSL1, LAS1L, MAX, MCRS1, MGA, KAT8/MOF, PELP1, PHF20, PRP31, RING2, RUVB1/TIP49A, RUVB2/TIP49B, SENP3, TAF1, TAF4, TAF6, TAF7, TAF9 and TEX10. Interacts with CHD7. Interacts with FAM124B. Interacts with CTNNB1. Interacts with PIAS3. Interacts with TLK2. Interacts with HNRNPL in an RNA-dependent manner. Post-translationally, sumoylated.

The protein localises to the nucleus. It carries out the reaction ATP + H2O = ADP + phosphate + H(+). Functionally, ATP-dependent chromatin-remodeling factor, it slides nucleosomes along DNA; nucleosome sliding requires ATP. Acts as a transcription repressor by remodeling chromatin structure and recruiting histone H1 to target genes. Suppresses p53/TP53-mediated apoptosis by recruiting histone H1 and preventing p53/TP53 transactivation activity. Acts as a negative regulator of Wnt signaling pathway by regulating beta-catenin (CTNNB1) activity. Negatively regulates CTNNB1-targeted gene expression by being recruited specifically to the promoter regions of several CTNNB1 responsive genes. Involved in both enhancer blocking and epigenetic remodeling at chromatin boundary via its interaction with CTCF. Acts as a suppressor of STAT3 activity by suppressing the LIF-induced STAT3 transcriptional activity. Also acts as a transcription activator via its interaction with ZNF143 by participating in efficient U6 RNA polymerase III transcription. Regulates alternative splicing of a core group of genes involved in neuronal differentiation, cell cycle and DNA repair. Enables H3K36me3-coupled transcription elongation and co-transcriptional RNA processing likely via interaction with HNRNPL. The polypeptide is Chromodomain-helicase-DNA-binding protein 8 (Rattus norvegicus (Rat)).